We begin with the raw amino-acid sequence, 1005 residues long: Pikachurin (1005 aa).

The N-terminal stretch at 1 to 24 (MDLISTFLLHFLLLACSLPPGAVS) is a signal peptide. 2 consecutive Fibronectin type-III domains span residues 37–136 (PPLD…TLSQ) and 144–239 (APHQ…TLGP). A glycan (N-linked (GlcNAc...) asparagine) is linked at asparagine 47. Residues 281–328 (PATKVGNKKSKKTSVSNSEMDSRLAQPTSASLPETTVAVPPTPAQRKG) are disordered. Residues 305–314 (AQPTSASLPE) show a composition bias toward polar residues. The EGF-like 1 domain occupies 339-377 (FDMSCDETLCSADSFCVNDYAWGGSRCHCNLGKGGEACS). Cystine bridges form between cysteine 343–cysteine 354, cysteine 348–cysteine 365, cysteine 367–cysteine 376, cysteine 530–cysteine 560, cysteine 565–cysteine 576, cysteine 570–cysteine 586, cysteine 588–cysteine 597, cysteine 784–cysteine 795, cysteine 789–cysteine 804, cysteine 806–cysteine 815, and cysteine 975–cysteine 1002. Positions 382–560 (IQYPQFFGHS…ALNGADVGEC (179 aa)) constitute a Laminin G-like 1 domain. 2 EGF-like domains span residues 561–598 (SSGICDEASCINGGTCAAIKADSYICLCPLGFRGRHCE) and 780–816 (AAHPCVGAPCAHGGSCRPRKEGYECDCPLGFEGLNCQ). One can recognise a Laminin G-like 2 domain in the interval 605 to 784 (IPQFRESLRS…VNVENAAHPC (180 aa)). One can recognise a Laminin G-like 3 domain in the interval 823–1002 (IEIPQFIGRS…AVDGKNINTC (180 aa)).

As to quaternary structure, interacts with DAG1 alpha-dystroglycan. Interacts with GPR158 and GPR179; transsynaptic interaction is required for synaptic organization of photoreceptor cells. O-glycosylated; contains chondroitin sulfate and heparan sulfate.

It is found in the secreted. Its subcellular location is the extracellular space. The protein localises to the extracellular matrix. It localises to the synaptic cleft. The protein resides in the presynaptic active zone. Functionally, involved in both the retinal photoreceptor ribbon synapse formation and physiological functions of visual perception. Plays a key role in the synaptic organization of photoreceptors by mediating transsynaptic interaction between alpha-dystroglycan and GPR179 on the postsynaptic membrane. Necessary for proper bipolar dendritic tip apposition to the photoreceptor ribbon synapse. Promotes matrix assembly and cell adhesiveness. This Rattus norvegicus (Rat) protein is Pikachurin (Egflam).